The sequence spans 554 residues: 3-(3-hydroxy-phenyl)propionate/3-hydroxycinnamic acid hydroxylase (554 aa).

Residues 17-46 (QVAIAGAGPVGLMMANYLGQMGIDVLVVEK) and 285-295 (FRIDRVLLAGD) each bind FAD.

This sequence belongs to the PheA/TfdB FAD monooxygenase family. It depends on FAD as a cofactor.

The enzyme catalyses 3-(3-hydroxyphenyl)propanoate + NADH + O2 + H(+) = 3-(2,3-dihydroxyphenyl)propanoate + NAD(+) + H2O. The catalysed reaction is (2E)-3-(3-hydroxyphenyl)prop-2-enoate + NADH + O2 + H(+) = (2E)-3-(2,3-dihydroxyphenyl)prop-2-enoate + NAD(+) + H2O. The protein operates within aromatic compound metabolism; 3-phenylpropanoate degradation. Its function is as follows. Catalyzes the insertion of one atom of molecular oxygen into position 2 of the phenyl ring of 3-(3-hydroxyphenyl)propionate (3-HPP) and hydroxycinnamic acid (3HCI). This Escherichia coli (strain 55989 / EAEC) protein is 3-(3-hydroxy-phenyl)propionate/3-hydroxycinnamic acid hydroxylase.